Here is a 379-residue protein sequence, read N- to C-terminus: Chaperone protein DnaJ (379 aa).

Residues Asp4–Gly69 form the J domain. Residues Gly137–Glu215 form a CR-type zinc finger. The Zn(2+) site is built by Cys150, Cys153, Cys167, Cys170, Cys189, Cys192, Cys203, and Cys206. CXXCXGXG motif repeat units lie at residues Cys150 to Gly157, Cys167 to Gly174, Cys189 to Gly196, and Cys203 to Gly210.

The protein belongs to the DnaJ family. Homodimer. Zn(2+) serves as cofactor.

The protein resides in the cytoplasm. In terms of biological role, participates actively in the response to hyperosmotic and heat shock by preventing the aggregation of stress-denatured proteins and by disaggregating proteins, also in an autonomous, DnaK-independent fashion. Unfolded proteins bind initially to DnaJ; upon interaction with the DnaJ-bound protein, DnaK hydrolyzes its bound ATP, resulting in the formation of a stable complex. GrpE releases ADP from DnaK; ATP binding to DnaK triggers the release of the substrate protein, thus completing the reaction cycle. Several rounds of ATP-dependent interactions between DnaJ, DnaK and GrpE are required for fully efficient folding. Also involved, together with DnaK and GrpE, in the DNA replication of plasmids through activation of initiation proteins. The polypeptide is Chaperone protein DnaJ (Rhizobium meliloti (strain 1021) (Ensifer meliloti)).